The following is a 332-amino-acid chain: D-alanine--D-alanine ligase (332 aa).

Over residues 1 to 17 the composition is skewed to polar residues; sequence MPMTMTQSATNPTATPV. Residues 1–28 form a disordered region; it reads MPMTMTQSATNPTATPVSANKASANAAT. A compositionally biased stretch (low complexity) spans 18-28; sequence SANKASANAAT. The 198-residue stretch at 132–329 folds into the ATP-grasp domain; the sequence is KQLWHGCGLS…FEQLCWHILA (198 aa). 158–213 provides a ligand contact to ATP; sequence VNTLGLPLIVKPVHEGSSIGMSKVNTLDELPKAYEVAAGCGDVVMAEKWITGREFT. Mg(2+) is bound by residues D283, E296, and N298.

It belongs to the D-alanine--D-alanine ligase family. Mg(2+) is required as a cofactor. Requires Mn(2+) as cofactor.

It localises to the cytoplasm. The enzyme catalyses 2 D-alanine + ATP = D-alanyl-D-alanine + ADP + phosphate + H(+). The protein operates within cell wall biogenesis; peptidoglycan biosynthesis. Functionally, cell wall formation. The polypeptide is D-alanine--D-alanine ligase (Psychrobacter sp. (strain PRwf-1)).